We begin with the raw amino-acid sequence, 332 residues long: Protein EXORDIUM-like 6 (332 aa).

The N-terminal stretch at 1 to 27 (MAMASASSSSSSISVIIFLLLAPLCLS) is a signal peptide. Residues asparagine 36, asparagine 102, and asparagine 143 are each glycosylated (N-linked (GlcNAc...) asparagine).

This sequence belongs to the EXORDIUM family.

The protein resides in the secreted. Its subcellular location is the extracellular space. It localises to the apoplast. Its function is as follows. May play a role in a brassinosteroid-dependent regulation of growth and development. This is Protein EXORDIUM-like 6 (EXL6) from Arabidopsis thaliana (Mouse-ear cress).